Consider the following 280-residue polypeptide: Large ribosomal subunit protein uL2 (280 aa).

2 disordered regions span residues 27–58 (STPEKSLVRPLHGHGGRNAHGRITTRHKGGGH) and 226–280 (MNPV…KHGR). Basic residues-rich tracts occupy residues 37–58 (LHGHGGRNAHGRITTRHKGGGH) and 268–280 (IVRRRRTGKKHGR).

The protein belongs to the universal ribosomal protein uL2 family. As to quaternary structure, part of the 50S ribosomal subunit. Forms a bridge to the 30S subunit in the 70S ribosome.

Its function is as follows. One of the primary rRNA binding proteins. Required for association of the 30S and 50S subunits to form the 70S ribosome, for tRNA binding and peptide bond formation. It has been suggested to have peptidyltransferase activity; this is somewhat controversial. Makes several contacts with the 16S rRNA in the 70S ribosome. This Mycobacterium ulcerans (strain Agy99) protein is Large ribosomal subunit protein uL2.